A 156-amino-acid chain; its full sequence is Putative type II restriction enzyme ApeKORF2002P (156 aa).

It to M.jannaschii MJ1199.

The enzyme catalyses Endonucleolytic cleavage of DNA to give specific double-stranded fragments with terminal 5'-phosphates.. Its function is as follows. A putative type II restriction enzyme, its methylase would be APE_2002. This Aeropyrum pernix (strain ATCC 700893 / DSM 11879 / JCM 9820 / NBRC 100138 / K1) protein is Putative type II restriction enzyme ApeKORF2002P.